The following is a 248-amino-acid chain: Ribonuclease 3 (248 aa).

The RNase III domain occupies 16 to 145 (TEGLETSIGY…LLAAMYLDGG (130 aa)). Residue glutamate 58 participates in Mg(2+) binding. Aspartate 62 is an active-site residue. The Mg(2+) site is built by asparagine 131 and glutamate 134. Glutamate 134 is an active-site residue. A DRBM domain is found at 172-241 (DFKTDFQELA…ARQCLERLET (70 aa)).

The protein belongs to the ribonuclease III family. As to quaternary structure, homodimer. Requires Mg(2+) as cofactor.

The protein resides in the cytoplasm. The enzyme catalyses Endonucleolytic cleavage to 5'-phosphomonoester.. In terms of biological role, digests double-stranded RNA. Involved in the processing of primary rRNA transcript to yield the immediate precursors to the large and small rRNAs (23S and 16S). Processes some mRNAs, and tRNAs when they are encoded in the rRNA operon. Processes pre-crRNA and tracrRNA of type II CRISPR loci if present in the organism. The polypeptide is Ribonuclease 3 (Geobacter sulfurreducens (strain ATCC 51573 / DSM 12127 / PCA)).